The primary structure comprises 507 residues: ATP synthase subunit alpha, chloroplastic (507 aa).

An ATP-binding site is contributed by Gly-170–Thr-177.

This sequence belongs to the ATPase alpha/beta chains family. As to quaternary structure, F-type ATPases have 2 components, CF(1) - the catalytic core - and CF(0) - the membrane proton channel. CF(1) has five subunits: alpha(3), beta(3), gamma(1), delta(1), epsilon(1). CF(0) has four main subunits: a, b, b' and c.

Its subcellular location is the plastid. It localises to the chloroplast thylakoid membrane. The catalysed reaction is ATP + H2O + 4 H(+)(in) = ADP + phosphate + 5 H(+)(out). Functionally, produces ATP from ADP in the presence of a proton gradient across the membrane. The alpha chain is a regulatory subunit. In Illicium oligandrum (Star anise), this protein is ATP synthase subunit alpha, chloroplastic.